Reading from the N-terminus, the 214-residue chain is Thymidylate kinase (214 aa).

9–16 (GIEGCGKT) contributes to the ATP binding site.

The protein belongs to the thymidylate kinase family.

It carries out the reaction dTMP + ATP = dTDP + ADP. Functionally, phosphorylation of dTMP to form dTDP in both de novo and salvage pathways of dTTP synthesis. This Geotalea daltonii (strain DSM 22248 / JCM 15807 / FRC-32) (Geobacter daltonii) protein is Thymidylate kinase.